A 267-amino-acid chain; its full sequence is 4-hydroxy-tetrahydrodipicolinate reductase (267 aa).

Residues 8–13 (GAGGRM) and glutamate 34 each bind NAD(+). Arginine 35 is a binding site for NADP(+). NAD(+) contacts are provided by residues 98–100 (GTT) and 122–125 (APNM). The active-site Proton donor/acceptor is the histidine 155. Histidine 156 contributes to the (S)-2,3,4,5-tetrahydrodipicolinate binding site. Lysine 159 (proton donor) is an active-site residue. (S)-2,3,4,5-tetrahydrodipicolinate is bound at residue 165 to 166 (GT).

The protein belongs to the DapB family.

The protein resides in the cytoplasm. It catalyses the reaction (S)-2,3,4,5-tetrahydrodipicolinate + NAD(+) + H2O = (2S,4S)-4-hydroxy-2,3,4,5-tetrahydrodipicolinate + NADH + H(+). The catalysed reaction is (S)-2,3,4,5-tetrahydrodipicolinate + NADP(+) + H2O = (2S,4S)-4-hydroxy-2,3,4,5-tetrahydrodipicolinate + NADPH + H(+). It functions in the pathway amino-acid biosynthesis; L-lysine biosynthesis via DAP pathway; (S)-tetrahydrodipicolinate from L-aspartate: step 4/4. Catalyzes the conversion of 4-hydroxy-tetrahydrodipicolinate (HTPA) to tetrahydrodipicolinate. The polypeptide is 4-hydroxy-tetrahydrodipicolinate reductase (Thioalkalivibrio sulfidiphilus (strain HL-EbGR7)).